Consider the following 198-residue polypeptide: Recombination protein RecR (198 aa).

Residues C57 to C72 form a C4-type zinc finger. Residues S80–S175 enclose the Toprim domain.

It belongs to the RecR family.

May play a role in DNA repair. It seems to be involved in an RecBC-independent recombinational process of DNA repair. It may act with RecF and RecO. The polypeptide is Recombination protein RecR (Staphylococcus aureus (strain MSSA476)).